Here is a 124-residue protein sequence, read N- to C-terminus: Holo-[acyl-carrier-protein] synthase (124 aa).

Mg(2+) contacts are provided by Asp-8 and Glu-56.

This sequence belongs to the P-Pant transferase superfamily. AcpS family. Requires Mg(2+) as cofactor.

It is found in the cytoplasm. It carries out the reaction apo-[ACP] + CoA = holo-[ACP] + adenosine 3',5'-bisphosphate + H(+). Functionally, transfers the 4'-phosphopantetheine moiety from coenzyme A to a Ser of acyl-carrier-protein. This Nitratidesulfovibrio vulgaris (strain ATCC 29579 / DSM 644 / CCUG 34227 / NCIMB 8303 / VKM B-1760 / Hildenborough) (Desulfovibrio vulgaris) protein is Holo-[acyl-carrier-protein] synthase.